The primary structure comprises 274 residues: MDRKIVVLDINTANFFNTTKDLEVWKNFFNFIQANNHQLVFMSSCWQQAVLYLLDLLSLDDVDIIAESGAIIWISKTNEFIYQSFLDSVSIDTIVHHAIITNSGVFAIGKSKISEEPNTTINYFISLEKYKQFKLIWLTEFDQTLKYQNFLKNLSEMDVSSIYVFSPQYHLDFQLMEHISSGQPKFHYSNFYNENFLFTSTKNSKFSALETYVKSKNCSLKDVHYLNVTEVPINNINQLASVVFLSKKQPDNDEEFNNPEISIVLKGICEQLMK.

Residue 104 to 111 (GVFAIGKS) coordinates ATP.

This is an uncharacterized protein from Mycoplasma genitalium (strain ATCC 33530 / DSM 19775 / NCTC 10195 / G37) (Mycoplasmoides genitalium).